The following is an 83-amino-acid chain: Alpha-toxin CvIV4 (83 aa).

Positions 1-19 are cleaved as a signal peptide; that stretch reads MNYFILILVAALLILDVNC. The 59-residue stretch at 21 to 79 folds into the LCN-type CS-alpha/beta domain; that stretch reads KDGYPVEHSGCKYTCWKNEYCDKVCKDLKGEGGYCYINLTCWCTGLPDNVPLKTNQRCN. 4 cysteine pairs are disulfide-bonded: Cys31–Cys78, Cys35–Cys55, Cys41–Cys61, and Cys45–Cys63.

It belongs to the long (4 C-C) scorpion toxin superfamily. Sodium channel inhibitor family. Expressed by the venom gland.

Its subcellular location is the secreted. Its function is as follows. This toxin significantly slows the fast inactivation of Nav1.2/SCN2A (EC(50)=580 nM), Nav1.3/SCN3A (EC(50)=1310 nM), Nav1.4/SCN4A (EC(50)=530 nM), and Nav1.7/SCN9A (EC(50)=1340 nM). The toxin does not affect the peak amplitude of Nav1.7 currents. On all channels cited above, the toxin requires depolarizing potentials to slow channel inactivation. In addition, the toxin has no or very weak effects on the voltage-dependence of steady-state inactivation, and on voltage-dependence of activation. In vivo, it produces paw licking in mice equivalent to the effects of whole venom. The sequence is that of Alpha-toxin CvIV4 from Centruroides vittatus (Striped bark scorpion).